We begin with the raw amino-acid sequence, 556 residues long: Outer spore wall assembly protein SHE10 (556 aa).

The first 21 residues, 1–21 (MRFLTKFLLFLATVYFGLKYA), serve as a signal peptide directing secretion. Residues 135 to 201 (NKNLKRHVER…KQITSDVKKT (67 aa)) are a coiled coil. Over residues 190 to 208 (EAKQITSDVKKTVESEIKK) the composition is skewed to basic and acidic residues. 2 disordered regions span residues 190–263 (EAKQ…EDIT) and 534–556 (RKEAGEVNESSEEEQIVEEPISA). A compositionally biased stretch (low complexity) spans 220-244 (IVSTSTIVKTITRTRHSSSSTTSTK). Basic and acidic residues predominate over residues 245–256 (SAEETSEKNLET). The stretch at 481 to 547 (KISEFKLLLD…GEVNESSEEE (67 aa)) forms a coiled coil.

It belongs to the SHE10 family. Component of the mitochondria-localized RNase mitochondrial RNA-processing (RNase MRP) composed of one single RNA encoded by the NME1 gene and at least 31 proteins. Absent in the nucleus-localized RNase MRP (NuMRP).

It is found in the mitochondrion. In terms of biological role, involved in spore wall assembly. May be a component of the mitochondrial RNase MRP (MtMRP), a ribonucleoprotein endoribonuclease involved in the cleaving RNA transcripts to generate primers for DNA replication in mitochondria. This Candida glabrata (strain ATCC 2001 / BCRC 20586 / JCM 3761 / NBRC 0622 / NRRL Y-65 / CBS 138) (Yeast) protein is Outer spore wall assembly protein SHE10.